The chain runs to 396 residues: Zinc metalloproteinase nas-19 (396 aa).

The N-terminal stretch at 1 to 20 (MVRLIHLIGAIILLFSYAYC) is a signal peptide. Positions 38-231 (RVKRQFERLG…YKINQYYGCW (194 aa)) constitute a Peptidase M12A domain. N-linked (GlcNAc...) asparagine glycosylation occurs at Asn-79. Disulfide bonds link Cys-82–Cys-230, Cys-105–Cys-130, Cys-232–Cys-252, and Cys-254–Cys-263. His-138 serves as a coordination point for Zn(2+). The active site involves Glu-139. Residues His-142 and His-148 each coordinate Zn(2+). The EGF-like domain maps to 225 to 264 (NQYYGCWCSKQLECKNGGYTSPSDCSRCNCPKGFFGNLCD). N-linked (GlcNAc...) asparagine glycosylation occurs at Asn-310.

Zn(2+) serves as cofactor.

It is found in the secreted. Functionally, metalloprotease. This Caenorhabditis elegans protein is Zinc metalloproteinase nas-19 (nas-19).